We begin with the raw amino-acid sequence, 513 residues long: Histidine ammonia-lyase (513 aa).

Residues Ala-143–Gly-145 constitute a cross-link (5-imidazolinone (Ala-Gly)). At Ser-144 the chain carries 2,3-didehydroalanine (Ser).

This sequence belongs to the PAL/histidase family. In terms of processing, contains an active site 4-methylidene-imidazol-5-one (MIO), which is formed autocatalytically by cyclization and dehydration of residues Ala-Ser-Gly.

The protein resides in the cytoplasm. The catalysed reaction is L-histidine = trans-urocanate + NH4(+). It participates in amino-acid degradation; L-histidine degradation into L-glutamate; N-formimidoyl-L-glutamate from L-histidine: step 1/3. This is Histidine ammonia-lyase from Xanthomonas campestris pv. campestris (strain B100).